Consider the following 401-residue polypeptide: Chalcone synthase 5 (401 aa).

Cys168 is a catalytic residue.

Belongs to the thiolase-like superfamily. Chalcone/stilbene synthases family.

The catalysed reaction is (E)-4-coumaroyl-CoA + 3 malonyl-CoA + 3 H(+) = 2',4,4',6'-tetrahydroxychalcone + 3 CO2 + 4 CoA. The protein operates within secondary metabolite biosynthesis; flavonoid biosynthesis. The primary product of this enzyme is 4,2',4',6'-tetrahydroxychalcone (also termed naringenin-chalcone or chalcone) which can under specific conditions spontaneously isomerize into naringenin. The protein is Chalcone synthase 5 (CHS5) of Sorghum bicolor (Sorghum).